Consider the following 304-residue polypeptide: Bifunctional phosphoglucose/phosphomannose isomerase (304 aa).

The SIS domain maps to 16 to 147 (FDKSFKVGKY…KPKIGDVDEA (132 aa)). Positions 35, 36, 74, 76, 79, and 122 each coordinate D-fructose 6-phosphate. The Proton acceptor role is filled by Glu-196. Positions 212 and 300 each coordinate D-fructose 6-phosphate. Catalysis depends on His-212, which acts as the Proton donor. The active-site Proton acceptor is Lys-300.

This sequence belongs to the PGI/PMI family. As to quaternary structure, homodimer.

The enzyme catalyses alpha-D-glucose 6-phosphate = beta-D-fructose 6-phosphate. The catalysed reaction is D-mannose 6-phosphate = D-fructose 6-phosphate. In terms of biological role, dual specificity isomerase that catalyzes the isomerization of both glucose-6-phosphate and mannose-6-phosphate to fructose-6-phosphate. The protein is Bifunctional phosphoglucose/phosphomannose isomerase of Thermoplasma volcanium (strain ATCC 51530 / DSM 4299 / JCM 9571 / NBRC 15438 / GSS1).